Here is a 448-residue protein sequence, read N- to C-terminus: Biotin carboxylase (448 aa).

The Biotin carboxylation domain occupies 1–445 (MLEKVVIANR…NIHYLEKKLG (445 aa)). ATP contacts are provided by residues Lys-116, Lys-159, 165–166 (GG), 201–204 (EKYL), His-209, and His-236. In terms of domain architecture, ATP-grasp spans 120 to 317 (IKAMKKAGVP…LVKEQLRIAA (198 aa)). Residue Lys-238 participates in hydrogencarbonate binding. Positions 276 and 288 each coordinate ATP. Glu-276, Glu-288, and Asn-290 together coordinate Mg(2+). Mn(2+)-binding residues include Glu-276, Glu-288, and Asn-290. The hydrogencarbonate site is built by Arg-292, Val-295, and Arg-338. The active site involves Arg-292. Arg-338 contacts biotin.

In terms of assembly, acetyl-CoA carboxylase is a heterohexamer of biotin carboxyl carrier protein, biotin carboxylase and the two subunits of carboxyl transferase in a 2:2 complex. Mg(2+) is required as a cofactor. It depends on Mn(2+) as a cofactor.

It carries out the reaction N(6)-biotinyl-L-lysyl-[protein] + hydrogencarbonate + ATP = N(6)-carboxybiotinyl-L-lysyl-[protein] + ADP + phosphate + H(+). It functions in the pathway lipid metabolism; malonyl-CoA biosynthesis; malonyl-CoA from acetyl-CoA: step 1/1. This protein is a component of the acetyl coenzyme A carboxylase complex; first, biotin carboxylase catalyzes the carboxylation of the carrier protein and then the transcarboxylase transfers the carboxyl group to form malonyl-CoA. This chain is Biotin carboxylase (accC), found in Haemophilus influenzae (strain ATCC 51907 / DSM 11121 / KW20 / Rd).